The sequence spans 199 residues: Recombination protein RecR (199 aa).

The segment at 56–71 adopts a C4-type zinc-finger fold; it reads CAICGNVSEKETCGIC. A Toprim domain is found at 79-174; sequence ATICVVEEAK…RVTRLASGLP (96 aa).

Belongs to the RecR family.

May play a role in DNA repair. It seems to be involved in an RecBC-independent recombinational process of DNA repair. It may act with RecF and RecO. This is Recombination protein RecR from Clavibacter michiganensis subsp. michiganensis (strain NCPPB 382).